The primary structure comprises 212 residues: 2,3-bisphosphoglycerate-dependent phosphoglycerate mutase (212 aa).

Substrate-binding positions include 9–16, 22–23, R61, 88–91, K99, 115–116, and 159–160; these read RHGQSEWN, TG, ERDY, RR, and GN. The active-site Tele-phosphohistidine intermediate is the H10. E88 functions as the Proton donor/acceptor in the catalytic mechanism.

The protein belongs to the phosphoglycerate mutase family. BPG-dependent PGAM subfamily. In terms of assembly, homodimer.

It catalyses the reaction (2R)-2-phosphoglycerate = (2R)-3-phosphoglycerate. It functions in the pathway carbohydrate degradation; glycolysis; pyruvate from D-glyceraldehyde 3-phosphate: step 3/5. Functionally, catalyzes the interconversion of 2-phosphoglycerate and 3-phosphoglycerate. This Methylorubrum extorquens (strain CM4 / NCIMB 13688) (Methylobacterium extorquens) protein is 2,3-bisphosphoglycerate-dependent phosphoglycerate mutase.